A 157-amino-acid chain; its full sequence is DNA gyrase inhibitor (157 aa).

The protein belongs to the DNA gyrase inhibitor family. Interacts with DNA gyrase.

The protein resides in the cytoplasm. In terms of biological role, inhibits the supercoiling activity of DNA gyrase. Acts by inhibiting DNA gyrase at an early step, prior to (or at the step of) binding of DNA by the gyrase. It protects cells against toxins that target DNA gyrase, by inhibiting activity of these toxins and reducing the formation of lethal double-strand breaks in the cell. In Klebsiella pneumoniae (strain 342), this protein is DNA gyrase inhibitor.